Consider the following 159-residue polypeptide: Nucleotide-binding protein PLES_47741 (159 aa).

The protein belongs to the YajQ family.

Its function is as follows. Nucleotide-binding protein. This chain is Nucleotide-binding protein PLES_47741, found in Pseudomonas aeruginosa (strain LESB58).